A 3232-amino-acid chain; its full sequence is D-lysergyl-peptide-synthetase subunit 1 (3232 aa).

Residues glycine 90–isoleucine 474 are adenylation (A) domain 1. In terms of domain architecture, Carrier 1 spans arginine 617–threonine 686. The residue at position 649 (serine 649) is an O-(pantetheine 4'-phosphoryl)serine. The condensation (C) domain 1 stretch occupies residues glutamate 731 to asparagine 1122. An adenylation (A) domain 2 region spans residues glutamine 1165–arginine 1572. In terms of domain architecture, Carrier 2 spans threonine 1717–glycine 1785. Serine 1749 carries the O-(pantetheine 4'-phosphoryl)serine modification. Residues glutamate 1835–methionine 2252 are condensation (C) domain 2. The adenylation (A) domain 3 stretch occupies residues glutamine 2276 to arginine 2675. The region spanning methionine 2810–glutamate 2878 is the Carrier 3 domain. At serine 2842 the chain carries O-(pantetheine 4'-phosphoryl)serine. The interval leucine 2943–isoleucine 3218 is cyclization (Cyc) domain.

The protein belongs to the NRP synthetase family.

It functions in the pathway alkaloid biosynthesis; ergot alkaloid biosynthesis. D-lysergyl-peptide-synthetase subunit 1; part of the gene cluster that mediates the biosynthesis of fungal ergot alkaloid. DmaW catalyzes the first step of ergot alkaloid biosynthesis by condensing dimethylallyl diphosphate (DMAP) and tryptophan to form 4-dimethylallyl-L-tryptophan. The second step is catalyzed by the methyltransferase easF that methylates 4-dimethylallyl-L-tryptophan in the presence of S-adenosyl-L-methionine, resulting in the formation of 4-dimethylallyl-L-abrine. The catalase easC and the FAD-dependent oxidoreductase easE then transform 4-dimethylallyl-L-abrine to chanoclavine-I which is further oxidized by easD in the presence of NAD(+), resulting in the formation of chanoclavine-I aldehyde. Agroclavine dehydrogenase easG then mediates the conversion of chanoclavine-I aldehyde to agroclavine via a non-enzymatic adduct reaction: the substrate is an iminium intermediate that is formed spontaneously from chanoclavine-I aldehyde in the presence of glutathione. The presence of easA is not required to complete this reaction. Further conversion of agroclavine to paspalic acid is a two-step process involving oxidation of agroclavine to elymoclavine and of elymoclavine to paspalic acid, the second step being performed by the elymoclavine oxidase cloA. Paspalic acid is then further converted to D-lysergic acid. Ergopeptines are assembled from D-lysergic acid and three different amino acids by the D-lysergyl-peptide-synthetases composed each of a monomudular and a trimodular nonribosomal peptide synthetase subunit. LpsB and lpsC encode the monomodular subunits responsible for D-lysergic acid activation and incorporation into the ergopeptine backbone. LpsA1 and A2 subunits encode the trimodular nonribosomal peptide synthetase assembling the tripeptide portion of ergopeptines. LpsA1 is responsible for formation of the major ergopeptine, ergotamine, and lpsA2 for alpha-ergocryptine, the minor ergopeptine of the total alkaloid mixture elaborated by C.purpurea. D-lysergyl-tripeptides are assembled by the nonribosomal peptide synthetases and released as N-(D-lysergyl-aminoacyl)-lactams. Cyclolization of the D-lysergyl-tripeptides is performed by the Fe(2+)/2-ketoglutarate-dependent dioxygenase easH which introduces a hydroxyl group into N-(D-lysergyl-aminoacyl)-lactam at alpha-C of the aminoacyl residue followed by spontaneous condensation with the terminal lactam carbonyl group. This chain is D-lysergyl-peptide-synthetase subunit 1, found in Claviceps purpurea (Ergot fungus).